A 617-amino-acid chain; its full sequence is E3 ubiquitin-protein ligase ORTHRUS 1 (617 aa).

The segment at aspartate 12–valine 62 adopts a PHD-type zinc-finger fold. Residues cysteine 129 to arginine 169 form an RING-type 1 zinc finger. Residues threonine 258–arginine 407 form the YDG domain. The RING-type 2 zinc-finger motif lies at cysteine 495–threonine 552. The stretch at glutamine 563–glutamate 593 forms a coiled coil. The segment at phenylalanine 575–alanine 617 is disordered. Residues glutamate 580–glutamate 595 show a composition bias toward acidic residues. Positions aspartate 604–alanine 617 are enriched in polar residues.

Expressed in inflorescences and leaves.

The protein localises to the nucleus. It catalyses the reaction S-ubiquitinyl-[E2 ubiquitin-conjugating enzyme]-L-cysteine + [acceptor protein]-L-lysine = [E2 ubiquitin-conjugating enzyme]-L-cysteine + N(6)-ubiquitinyl-[acceptor protein]-L-lysine.. It functions in the pathway protein modification; protein ubiquitination. E3 ubiquitin-protein ligase. Participates in CpG methylation-dependent transcriptional regulation and epigenetic transcriptional silencing. Mediates ubiquitination with the E2 ubiquitin-conjugating enzymes UBC11, UBC8 and UBC8 homologs (e.g. UBC10, UBC11, UBC28 and UBC29) but not with UBC27, UBC30, UBC32, UBC34 and UBC36. Promotes methylation-mediated gene silencing leading, for example, to early flowering. Can bind to CpG, CpNpG, and CpNpN DNA motifs, with a strong preference for methylated forms, and with highest affinity for CpG substrate. The polypeptide is E3 ubiquitin-protein ligase ORTHRUS 1 (ORTH1) (Arabidopsis thaliana (Mouse-ear cress)).